The chain runs to 194 residues: Imidazoleglycerol-phosphate dehydratase (194 aa).

This sequence belongs to the imidazoleglycerol-phosphate dehydratase family.

The protein resides in the cytoplasm. It carries out the reaction D-erythro-1-(imidazol-4-yl)glycerol 3-phosphate = 3-(imidazol-4-yl)-2-oxopropyl phosphate + H2O. Its pathway is amino-acid biosynthesis; L-histidine biosynthesis; L-histidine from 5-phospho-alpha-D-ribose 1-diphosphate: step 6/9. This chain is Imidazoleglycerol-phosphate dehydratase, found in Caldicellulosiruptor saccharolyticus (strain ATCC 43494 / DSM 8903 / Tp8T 6331).